We begin with the raw amino-acid sequence, 356 residues long: Nicotinate-nucleotide--dimethylbenzimidazole phosphoribosyltransferase (356 aa).

E317 serves as the catalytic Proton acceptor.

This sequence belongs to the CobT family. As to quaternary structure, homodimer.

The catalysed reaction is 5,6-dimethylbenzimidazole + nicotinate beta-D-ribonucleotide = alpha-ribazole 5'-phosphate + nicotinate + H(+). It participates in nucleoside biosynthesis; alpha-ribazole biosynthesis; alpha-ribazole from 5,6-dimethylbenzimidazole: step 1/2. In terms of biological role, catalyzes the synthesis of alpha-ribazole-5'-phosphate from nicotinate mononucleotide (NAMN) and 5,6-dimethylbenzimidazole (DMB). The polypeptide is Nicotinate-nucleotide--dimethylbenzimidazole phosphoribosyltransferase (Salmonella paratyphi A (strain ATCC 9150 / SARB42)).